Here is a 188-residue protein sequence, read N- to C-terminus: dITP/XTP pyrophosphatase (188 aa).

Residue threonine 10–lysine 15 coordinates substrate. Glutamate 39 and aspartate 69 together coordinate Mg(2+). The Proton acceptor role is filled by aspartate 69. Substrate-binding positions include serine 70, phenylalanine 145–aspartate 148, lysine 168, and histidine 173–arginine 174.

This sequence belongs to the HAM1 NTPase family. In terms of assembly, homodimer. Mg(2+) is required as a cofactor.

The catalysed reaction is XTP + H2O = XMP + diphosphate + H(+). It catalyses the reaction dITP + H2O = dIMP + diphosphate + H(+). The enzyme catalyses ITP + H2O = IMP + diphosphate + H(+). Functionally, pyrophosphatase that catalyzes the hydrolysis of nucleoside triphosphates to their monophosphate derivatives, with a high preference for the non-canonical purine nucleotides XTP (xanthosine triphosphate), dITP (deoxyinosine triphosphate) and ITP. Seems to function as a house-cleaning enzyme that removes non-canonical purine nucleotides from the nucleotide pool, thus preventing their incorporation into DNA/RNA and avoiding chromosomal lesions. In Ignicoccus hospitalis (strain KIN4/I / DSM 18386 / JCM 14125), this protein is dITP/XTP pyrophosphatase.